A 485-amino-acid polypeptide reads, in one-letter code: Cytochrome P450 monooxygenase tndB (485 aa).

The helical transmembrane segment at 20-40 threads the bilayer; that stretch reads VYGISAVIAVGLAIYSASLAI. Heme is bound at residue cysteine 481.

The protein belongs to the cytochrome P450 family. It depends on heme as a cofactor.

Its subcellular location is the membrane. Its pathway is secondary metabolite biosynthesis; terpenoid biosynthesis. Functionally, cytochrome P450 monooxygenase; part of the gene cluster that mediates the biosynthesis of talaronoid C, a fusicoccane diterpenoid with an unprecedented tricyclic 5/8/6 ring system. The first step in the pathway is performed by the fusicoccadiene synthase tndC that possesses both prenyl transferase and terpene cyclase activity, converting isopentenyl diphosphate and dimethylallyl diphosphate into geranylgeranyl diphosphate (GGDP) and further converting GGDP into talarodiene, a precursor for talaronoid C. The remaining enzymes from the cluster include the cytochrome P450 monooxygenase tndB, the aldehyde reductase tndE and the alcohol dehydrogenase tndF that are involved in the conversion of talarodiene into talaronoid C. This Aspergillus flavipes protein is Cytochrome P450 monooxygenase tndB.